The primary structure comprises 29 residues: Cytochrome b6-f complex subunit 8 (29 aa).

The chain crosses the membrane as a helical span at residues 3 to 23 (ILTLGWVSILALFTWSIAMVV).

Belongs to the PetN family. As to quaternary structure, the 4 large subunits of the cytochrome b6-f complex are cytochrome b6, subunit IV (17 kDa polypeptide, PetD), cytochrome f and the Rieske protein, while the 4 small subunits are PetG, PetL, PetM and PetN. The complex functions as a dimer.

Its subcellular location is the cellular thylakoid membrane. In terms of biological role, component of the cytochrome b6-f complex, which mediates electron transfer between photosystem II (PSII) and photosystem I (PSI), cyclic electron flow around PSI, and state transitions. The protein is Cytochrome b6-f complex subunit 8 of Microcystis aeruginosa (strain NIES-843 / IAM M-2473).